We begin with the raw amino-acid sequence, 430 residues long: Adenylosuccinate synthetase (430 aa).

Residues 13 to 19 (GDEGKGK) and 41 to 43 (GHT) each bind GTP. Aspartate 14 acts as the Proton acceptor in catalysis. The Mg(2+) site is built by aspartate 14 and glycine 41. IMP contacts are provided by residues 14–17 (DEGK), 39–42 (NAGH), threonine 130, arginine 144, glutamine 225, threonine 240, and arginine 304. Histidine 42 (proton donor) is an active-site residue. Residue 300–306 (ASTGRPR) coordinates substrate. GTP is bound by residues arginine 306, 332 to 334 (KLD), and 414 to 416 (STG).

This sequence belongs to the adenylosuccinate synthetase family. Homodimer. Mg(2+) is required as a cofactor.

It is found in the cytoplasm. The enzyme catalyses IMP + L-aspartate + GTP = N(6)-(1,2-dicarboxyethyl)-AMP + GDP + phosphate + 2 H(+). The protein operates within purine metabolism; AMP biosynthesis via de novo pathway; AMP from IMP: step 1/2. Plays an important role in the de novo pathway of purine nucleotide biosynthesis. Catalyzes the first committed step in the biosynthesis of AMP from IMP. The protein is Adenylosuccinate synthetase of Xanthomonas oryzae pv. oryzae (strain PXO99A).